Here is a 336-residue protein sequence, read N- to C-terminus: NADH-cytochrome b5 reductase 2 (336 aa).

Residues 28 to 50 (GGSSNGALYVGIGAAGLAGAYIY) traverse the membrane as a helical segment. Residues 84–189 (QGFISLLLDK…KGPIPKYPWS (106 aa)) enclose the FAD-binding FR-type domain. An FAD-binding site is contributed by 192–227 (KHEHIALIAGGTGITPMWQTARAIFKNPEDKTKVTL).

The protein belongs to the flavoprotein pyridine nucleotide cytochrome reductase family. FAD is required as a cofactor.

The protein resides in the mitochondrion outer membrane. It carries out the reaction 2 Fe(III)-[cytochrome b5] + NADH = 2 Fe(II)-[cytochrome b5] + NAD(+) + H(+). In terms of biological role, may mediate the reduction of outer membrane cytochrome b5. This is NADH-cytochrome b5 reductase 2 (MCR1) from Phaeosphaeria nodorum (strain SN15 / ATCC MYA-4574 / FGSC 10173) (Glume blotch fungus).